The following is a 208-amino-acid chain: T-cell surface glycoprotein CD8 beta chain (208 aa).

Positions 1–21 are cleaved as a signal peptide; it reads MQPWLWLVFSVKLSALWGSSA. In terms of domain architecture, Ig-like V-type spans 22 to 131; the sequence is LLQTPSSLLV…MVVFGTGTKL (110 aa). Residues 22-168 are Extracellular-facing; sequence LLQTPSSLLV…KTQKGLTCGL (147 aa). 3 N-linked (GlcNAc...) asparagine glycosylation sites follow: N34, N88, and N94. An intrachain disulfide couples C41 to C115. Residues 169-189 form a helical membrane-spanning segment; that stretch reads ITLSLLVACILVLLVSLSVAI. Residues 190–208 lie on the Cytoplasmic side of the membrane; that stretch reads HFHCMRRRARIHFMKQFHK.

Forms disulfide-linked heterodimers with CD8A at the cell surface. Interacts with CD3D; this interaction couples TCR-CD3 with CD8. Interacts with LCK. In terms of processing, phosphorylated as a consequence of T-cell activation. Post-translationally, palmitoylated at the cytoplasmic tail and thereby targets the heterodimer CD8A/CD8B to lipid rafts unlike CD8A homodimers.

The protein localises to the cell membrane. In terms of biological role, integral membrane glycoprotein that plays an essential role in the immune response and serves multiple functions in responses against both external and internal offenses. In T-cells, functions primarily as a coreceptor for MHC class I molecule:peptide complex. The antigens presented by class I peptides are derived from cytosolic proteins while class II derived from extracellular proteins. Interacts simultaneously with the T-cell receptor (TCR) and the MHC class I proteins presented by antigen presenting cells (APCs). In turn, recruits the Src kinase LCK to the vicinity of the TCR-CD3 complex. A palmitoylation site in the cytoplasmic tail of CD8B chain contributes to partitioning of CD8 into the plasma membrane lipid rafts where signaling proteins are enriched. Once LCK recruited, it initiates different intracellular signaling pathways by phosphorylating various substrates ultimately leading to lymphokine production, motility, adhesion and activation of cytotoxic T-lymphocytes (CTLs). Additionally, plays a critical role in thymic selection of CD8+ T-cells. This Rattus norvegicus (Rat) protein is T-cell surface glycoprotein CD8 beta chain (Cd8b).